Reading from the N-terminus, the 141-residue chain is Cholinesterase (141 aa).

Asparagine 39 carries N-linked (GlcNAc...) asparagine glycosylation. 49–50 (GG) serves as a coordination point for substrate. Serine 131 (acyl-ester intermediate) is an active-site residue. Serine 131 carries the phosphoserine modification.

The protein belongs to the type-B carboxylesterase/lipase family. Homotetramer; disulfide-linked. Dimer of dimers. In terms of tissue distribution, present in most cells except erythrocytes.

It is found in the secreted. It carries out the reaction an acylcholine + H2O = a carboxylate + choline + H(+). Esterase with broad substrate specificity. Contributes to the inactivation of the neurotransmitter acetylcholine. Can degrade neurotoxic organophosphate esters. This is Cholinesterase (BCHE) from Canis lupus familiaris (Dog).